The following is a 96-amino-acid chain: UPF0235 protein YggU (96 aa).

It belongs to the UPF0235 family.

This is UPF0235 protein YggU from Shigella flexneri.